A 630-amino-acid chain; its full sequence is Mesothelin (630 aa).

A signal peptide spans 1 to 36 (MALPTARPLLGSCGTPALGSLLFLLFSLGWVQPSRT). Asn57 carries an N-linked (GlcNAc...) asparagine glycan. Ser200 is subject to Phosphoserine; by FAM20C. Residues 262–286 (SIPQGIVAAWRQRSSRDPSWRQPER) are required for megakaryocyte-potentiating factor activity. Cys302 and Cys326 form a disulfide bridge. Asn388, Asn496, and Asn523 each carry an N-linked (GlcNAc...) asparagine glycan. Ser606 is lipidated: GPI-anchor amidated serine. A propeptide spans 607 to 630 (GTPCLLGPGPVLTVLALLLASTLA) (removed in mature form).

Belongs to the mesothelin family. As to quaternary structure, interacts with MUC16. Post-translationally, both MPF and the cleaved form of mesothelin are N-glycosylated. Proteolytically cleaved by a furin-like convertase to generate megakaryocyte-potentiating factor (MPF), and the cleaved form of mesothelin. Expressed in lung. Expressed at low levels in heart, placenta and kidney. Expressed in mesothelial cells. Highly expressed in mesotheliomas, ovarian cancers, and some squamous cell carcinomas (at protein level).

It localises to the cell membrane. The protein localises to the golgi apparatus. The protein resides in the secreted. Membrane-anchored forms may play a role in cellular adhesion. Functionally, megakaryocyte-potentiating factor (MPF) potentiates megakaryocyte colony formation in vitro. The sequence is that of Mesothelin (MSLN) from Homo sapiens (Human).